The chain runs to 847 residues: Glucans biosynthesis glucosyltransferase H (847 aa).

Residues 1 to 138 (MNKTTEYIDA…KWRTVGTIRR (138 aa)) lie on the Cytoplasmic side of the membrane. Residues 139–156 (YILLILTLAQTVVATWYM) traverse the membrane as a helical segment. Topologically, residues 157 to 193 (KTILPYQGWALINPMDMVGQDIWVSFMQLLPYMLQTG) are periplasmic. The helical transmembrane segment at 194–216 (ILILFAVLFCWVSAGFWTALMGF) threads the bilayer. The Cytoplasmic segment spans residues 217 to 511 (LQLLIGRDKY…LVKGMHPVHR (295 aa)). Residues 512–534 (AVFLTGVMSYLSAPLWFMFLALS) traverse the membrane as a helical segment. Residues 535–567 (TALQVVHALTEPQYFLQPRQLFPVWPQWRPELA) are Periplasmic-facing. Residues 568 to 590 (IALFASTMVLLFLPKLLSIMLIW) form a helical membrane-spanning segment. The Cytoplasmic segment spans residues 591–602 (CKGTKEYGGFWR). The chain crosses the membrane as a helical span at residues 603 to 625 (VTLSLLLEVLFSVLLAPVRMLFH). Over 626 to 679 (TVFVVSAFLGWEVVWNSPQRDDDSTPWGEAFMRHGSQLLLGLVWAVGMAWLDLR) the chain is Periplasmic. The helical transmembrane segment at 680-702 (FLFWLAPIVFSLILSPFVSVISS) threads the bilayer. Topologically, residues 703–847 (RSTVGLRTKR…ALQGRTSSAG (145 aa)) are cytoplasmic.

The protein belongs to the glycosyltransferase 2 family. OpgH subfamily.

It localises to the cell inner membrane. The protein operates within glycan metabolism; osmoregulated periplasmic glucan (OPG) biosynthesis. Functionally, involved in the biosynthesis of osmoregulated periplasmic glucans (OPGs). This chain is Glucans biosynthesis glucosyltransferase H, found in Salmonella typhi.